Reading from the N-terminus, the 290-residue chain is Plasma membrane ascorbate-dependent reductase CYBRD1 (290 aa).

Topologically, residues 1–7 (MAMEGYR) are cytoplasmic. Residues 8 to 32 (GFLGLLVSALLVGFLSVIFVLIWVL) form a helical membrane-spanning segment. Positions 15–220 (SALLVGFLSV…FGALIFWIVT (206 aa)) constitute a Cytochrome b561 domain. Residues 33–47 (HFREGLGWNGSGLEF) are Extracellular-facing. Residues 48–69 (NWHPVLAVTGFVFIQGIAIIVY) form a helical membrane-spanning segment. Heme b contacts are provided by His50, Arg70, and Lys79. At 70–78 (RLPWTWKCS) the chain is on the cytoplasmic side. Residues Lys79 and Lys83 each contribute to the L-ascorbate site. The helical transmembrane segment at 79-105 (KLLMKSIHAGLNAVAAILAIISVVAVF) threads the bilayer. Residue His86 coordinates heme b. Over 106–118 (EYHNVQKVPHMYS) the chain is Extracellular. Residue His108 coordinates Fe(3+). Heme b is bound by residues 115–118 (HMYS) and His120. Residues 119-144 (LHSWVGLTALILYIQQLVVGFFVFLL) traverse the membrane as a helical segment. The Cytoplasmic portion of the chain corresponds to 145-151 (PWAPPSL). Arg152 contributes to the L-ascorbate binding site. Residues 152 to 179 (RAIVMPIHVYSGLLLFGTVIATVLMGVT) traverse the membrane as a helical segment. Positions 159 and 180 each coordinate heme b. Residues 180-197 (EKLFFVLKHPSYHSFPPE) are Extracellular-facing. A helical membrane pass occupies residues 198-222 (GVFTNTLGLLILVFGALIFWIVTRP). Residues 223–290 (QWKRPREPGS…LADSGQRSTM (68 aa)) lie on the Cytoplasmic side of the membrane. Lys225 is a heme b binding site. Ser232 bears the Phosphoserine mark. A disordered region spans residues 257–290 (SMDAADPADAESSSEGAARKRTLGLADSGQRSTM). Low complexity predominate over residues 260–272 (AADPADAESSSEG). Thr289 is subject to Phosphothreonine.

Homodimer. It depends on heme b as a cofactor. Highly expressed in the brush-border membrane of duodenal enterocytes (at protein level). Also expressed in liver and spleen.

It is found in the cell membrane. Its subcellular location is the apical cell membrane. It catalyses the reaction Fe(3+)(out) + L-ascorbate(in) = monodehydro-L-ascorbate radical(in) + Fe(2+)(out) + H(+). It carries out the reaction Cu(2+)(out) + L-ascorbate(in) = Cu(+)(out) + monodehydro-L-ascorbate radical(in) + H(+). The catalysed reaction is monodehydro-L-ascorbate radical(out) + L-ascorbate(in) = monodehydro-L-ascorbate radical(in) + L-ascorbate(out). Functionally, plasma membrane reductase that uses cytoplasmic ascorbate as an electron donor to reduce extracellular Fe(3+) into Fe(2+). Probably functions in dietary iron absorption at the brush border of duodenal enterocytes by producing Fe(2+), the divalent form of iron that can be transported into enterocytes. It is also able to reduce extracellular monodehydro-L-ascorbate and may be involved in extracellular ascorbate regeneration by erythrocytes in blood. May also act as a ferrireductase in airway epithelial cells. May also function as a cupric transmembrane reductase. This chain is Plasma membrane ascorbate-dependent reductase CYBRD1, found in Mus musculus (Mouse).